The sequence spans 114 residues: Hydrogenase maturation factor HypA (114 aa).

H2 is a Ni(2+) binding site. Zn(2+) contacts are provided by C70, C73, C86, and C89.

The protein belongs to the HypA/HybF family.

Involved in the maturation of [NiFe] hydrogenases. Required for nickel insertion into the metal center of the hydrogenase. This is Hydrogenase maturation factor HypA from Crocosphaera subtropica (strain ATCC 51142 / BH68) (Cyanothece sp. (strain ATCC 51142)).